Here is a 463-residue protein sequence, read N- to C-terminus: NADH-quinone oxidoreductase subunit N (463 aa).

The next 14 membrane-spanning stretches (helical) occupy residues 5-25 (LLYG…LMLL), 34-54 (AGSA…VMQL), 72-92 (FSEI…VYSL), 99-119 (KYWI…DSAG), 120-140 (FISL…LMVL), 154-174 (YLLL…LVYG), 196-216 (LAAS…FPFH), 230-250 (VTAF…VRIL), 259-279 (AVTV…ITAI), 286-303 (KMLA…MFAL), 314-334 (LLYY…CFSI), 356-376 (AILL…PGFL), 393-413 (VAVL…GVVL), and 432-452 (LCWT…FMLL).

This sequence belongs to the complex I subunit 2 family. NDH-1 is composed of 14 different subunits. Subunits NuoA, H, J, K, L, M, N constitute the membrane sector of the complex.

It localises to the cell inner membrane. It catalyses the reaction a quinone + NADH + 5 H(+)(in) = a quinol + NAD(+) + 4 H(+)(out). Its function is as follows. NDH-1 shuttles electrons from NADH, via FMN and iron-sulfur (Fe-S) centers, to quinones in the respiratory chain. The immediate electron acceptor for the enzyme in this species is believed to be ubiquinone. Couples the redox reaction to proton translocation (for every two electrons transferred, four hydrogen ions are translocated across the cytoplasmic membrane), and thus conserves the redox energy in a proton gradient. The sequence is that of NADH-quinone oxidoreductase subunit N from Pelobacter propionicus (strain DSM 2379 / NBRC 103807 / OttBd1).